Consider the following 217-residue polypeptide: Non-structural protein NS3 (217 aa).

Belongs to the orbivirus NS3 family.

In terms of biological role, may play a role in the release of virions from infected cells. The protein is Non-structural protein NS3 (Segment-10) of Camelus dromedarius (Dromedary).